A 982-amino-acid polypeptide reads, in one-letter code: Protein lin-10 (982 aa).

Residues 1–16 (MSSEAVAQATAATTSP) are compositionally biased toward polar residues. Disordered regions lie at residues 1–55 (MSSE…MIPP), 119–228 (QPAL…RTDS), 269–327 (TVAD…STVP), 432–511 (FAQQ…GTDD), and 525–593 (QREQ…SKET). The segment covering 33–44 (KGGGAGGGGGGE) has biased composition (gly residues). Residues 119–134 (QPALQQPRPSSQASSS) are compositionally biased toward low complexity. Composition is skewed to polar residues over residues 143 to 156 (RQTA…NVSP) and 169 to 190 (ETSG…SSDV). The span at 211 to 228 (GEEKSEEKRKLSGDRTDS) shows a compositional bias: basic and acidic residues. Over residues 301–318 (SLNQLRSSFNLPDDSTTV) the composition is skewed to polar residues. Low complexity-rich tracts occupy residues 432 to 445 (FAQQ…APTP) and 454 to 464 (PSTSSGPSGAL). The segment covering 490–501 (NGTSTSTTNGAQ) has biased composition (polar residues). Positions 539–550 (QEAATAAQEAAE) are enriched in low complexity. Basic and acidic residues predominate over residues 577–593 (GAERRGSVDKKKNSKET). The PID domain occupies 604–788 (GVLFRARYLG…VLNSQELLGD (185 aa)). 2 PDZ domains span residues 801 to 886 (EVVV…TVVS) and 892 to 968 (EVRI…MPTS).

Interacts (via N-terminus) with egl-9 isoform e (via catalytic domain); the interaction regulates its trafficking; the interaction is direct. Interacts with rab-6.2 (in GTP-bound form). Post-translationally, phosphorylated on multiple Ser and Thr residues by cdk-5 which regulates its localization. In terms of processing, may be hydroxylated by egl-9 isoform e on multiple Pro residues which may prevent phosphorylation by cdk-5. Expressed in vulval epithelial cells and neurons.

The protein resides in the golgi apparatus. It is found in the golgi stack membrane. It localises to the trans-Golgi network membrane. The protein localises to the cytoplasm. Its subcellular location is the synapse. The protein resides in the perikaryon. Required specifically for the determination of 3 vulval precursor cell fates P5.p, P6.p and P7.p during late second and early third larval stages; required for basolateral localization of receptor tyrosine kinase let-23. Could have a general but redundant role in development, functioning in diverse cell lineages to control cell fates. Regulates the trafficking of the glr-1 subunit of AMPA-type glutamate receptors (AMPRs) in the ventral nerve cord. This may be partly through interacting with the small GTPase rab-6.2 in its active GTP-bound state. The sequence is that of Protein lin-10 from Caenorhabditis elegans.